The primary structure comprises 134 residues: Putative transposase InsN for insertion sequence element IS911A (134 aa).

This sequence belongs to the transposase 8 family.

Involved in the transposition of the insertion sequence IS911. The protein is Putative transposase InsN for insertion sequence element IS911A (insN1) of Escherichia coli (strain K12).